The primary structure comprises 352 residues: C-C chemokine receptor type 5 (352 aa).

Over 1 to 30 (MDYQVSSPTYDIDYYTSEPCQKVNVKQIAA) the chain is Extracellular. Tyr3 carries the sulfotyrosine modification. Residues Ser6 and Ser7 are each glycosylated (O-linked (GalNAc...) serine). Residues Tyr10, Tyr14, and Tyr15 each carry the sulfotyrosine modification. Intrachain disulfides connect Cys20/Cys269 and Cys101/Cys178. Residues 31–58 (RLLPPLYSLVFIFGFVGNILVVLILINC) form a helical membrane-spanning segment. At 59–68 (KRLKSMTDIY) the chain is on the cytoplasmic side. The chain crosses the membrane as a helical span at residues 69–89 (LLNLAISDLFFLLTVPFWAHY). Residues 90–102 (AAAQWDFGNTMCQ) are Extracellular-facing. A helical membrane pass occupies residues 103 to 124 (LLTGLYFIGFFSGIFFIILLTI). The Cytoplasmic segment spans residues 125 to 141 (DRYLAIVHAVFALKART). The helical transmembrane segment at 142 to 166 (VTFGVVTSVITWVVAVFASLPGIIF) threads the bilayer. Residues 167–198 (TRSQREGLHYTCSSHFPYSQYQFWKNFQTLKI) are Extracellular-facing. The chain crosses the membrane as a helical span at residues 199–218 (VILGLVLPLLVMVICYSGIL). The Cytoplasmic segment spans residues 219–235 (KTLLRCRNEKKRHRAVR). Residues 236-260 (LIFTIMIVYFLFWAPYNIVLLLNTF) form a helical membrane-spanning segment. Topologically, residues 261-277 (QEFFGLNNCSSSNRLDQ) are extracellular. The helical transmembrane segment at 278–301 (AMQVTETLGMTHCCINPIIYAFVG) threads the bilayer. Residues 302 to 352 (EKFRNYLLVFFQKHIAKRFCKCCSIFQQEAPERASSVYTRSTGEQEISVGL) lie on the Cytoplasmic side of the membrane. S-palmitoyl cysteine attachment occurs at residues Cys321, Cys323, and Cys324. Phosphoserine; by BARK1 is present on residues Ser336, Ser337, Ser342, and Ser349.

The protein belongs to the G-protein coupled receptor 1 family. As to quaternary structure, interacts with PRAF2. Efficient ligand binding to CCL3/MIP-1alpha and CCL4/MIP-1beta requires sulfation, O-glycosylation and sialic acid modifications. Glycosylation on Ser-6 is required for efficient binding of CCL4. Interacts with GRK2. Interacts with ARRB1 and ARRB2. Interacts with CNIH4. Interacts with S100A4; this interaction stimulates T-lymphocyte chemotaxis. In terms of processing, sulfated on at least 2 of the N-terminal tyrosines. Sulfation is required for efficient binding of the chemokines, CCL3 and CCL4. Palmitoylation in the C-terminal is important for cell surface expression. Post-translationally, phosphorylation on serine residues in the C-terminal is stimulated by binding CC chemokines especially by APO-RANTES. In terms of processing, O-glycosylated, but not N-glycosylated. Ser-6 appears to be the major site even if Ser-7 may be also O-glycosylated. Also sialylated glycans present which contribute to chemokine binding. Thr-16 and Ser-17 may also be glycosylated and, if so, with small moieties such as a T-antigen.

Its subcellular location is the cell membrane. Functionally, receptor for a number of inflammatory CC-chemokines including CCL3/MIP-1-alpha, CCL4/MIP-1-beta and RANTES and subsequently transduces a signal by increasing the intracellular calcium ion level. May play a role in the control of granulocytic lineage proliferation or differentiation. Participates in T-lymphocyte migration to the infection site by acting as a chemotactic receptor. The polypeptide is C-C chemokine receptor type 5 (CCR5) (Semnopithecus entellus (Northern plains gray langur)).